The following is a 410-amino-acid chain: Multifunctional CCA protein (410 aa).

ATP-binding residues include Gly8 and Arg11. CTP is bound by residues Gly8 and Arg11. Mg(2+)-binding residues include Asp21 and Asp23. The ATP site is built by Arg91, Arg137, and Arg140. Arg91, Arg137, and Arg140 together coordinate CTP. Residues 228–329 (TGVHVLSVLQ…LELLQSFDVY (102 aa)) enclose the HD domain.

Belongs to the tRNA nucleotidyltransferase/poly(A) polymerase family. Bacterial CCA-adding enzyme type 1 subfamily. In terms of assembly, monomer. Can also form homodimers and oligomers. Requires Mg(2+) as cofactor. The cofactor is Ni(2+).

The catalysed reaction is a tRNA precursor + 2 CTP + ATP = a tRNA with a 3' CCA end + 3 diphosphate. The enzyme catalyses a tRNA with a 3' CCA end + 2 CTP + ATP = a tRNA with a 3' CCACCA end + 3 diphosphate. Catalyzes the addition and repair of the essential 3'-terminal CCA sequence in tRNAs without using a nucleic acid template. Adds these three nucleotides in the order of C, C, and A to the tRNA nucleotide-73, using CTP and ATP as substrates and producing inorganic pyrophosphate. tRNA 3'-terminal CCA addition is required both for tRNA processing and repair. Also involved in tRNA surveillance by mediating tandem CCA addition to generate a CCACCA at the 3' terminus of unstable tRNAs. While stable tRNAs receive only 3'-terminal CCA, unstable tRNAs are marked with CCACCA and rapidly degraded. This Pseudomonas paraeruginosa (strain DSM 24068 / PA7) (Pseudomonas aeruginosa (strain PA7)) protein is Multifunctional CCA protein.